The chain runs to 144 residues: Large ribosomal subunit protein uL15 (144 aa).

The interval 1–52 is disordered; the sequence is MRLNTLSPAEGAKHSAKRLGRGIGSGLGKTGGRGHKGQKSRTGSGVRRGFEG. Residues 21 to 31 show a composition bias toward gly residues; the sequence is RGIGSGLGKTG.

The protein belongs to the universal ribosomal protein uL15 family. Part of the 50S ribosomal subunit.

In terms of biological role, binds to the 23S rRNA. In Haemophilus influenzae (strain 86-028NP), this protein is Large ribosomal subunit protein uL15.